The chain runs to 183 residues: Ribosome-recycling factor (183 aa).

This sequence belongs to the RRF family.

The protein resides in the cytoplasm. Responsible for the release of ribosomes from messenger RNA at the termination of protein biosynthesis. May increase the efficiency of translation by recycling ribosomes from one round of translation to another. In Bifidobacterium longum (strain DJO10A), this protein is Ribosome-recycling factor.